We begin with the raw amino-acid sequence, 187 residues long: Ribonuclease HII (187 aa).

Residues 1–187 (MIILGIDEAG…YKPVQVLLNE (187 aa)) enclose the RNase H type-2 domain. Positions 7, 8, and 99 each coordinate a divalent metal cation.

The protein belongs to the RNase HII family. Requires Mn(2+) as cofactor. Mg(2+) serves as cofactor.

The protein resides in the cytoplasm. The catalysed reaction is Endonucleolytic cleavage to 5'-phosphomonoester.. Functionally, endonuclease that specifically degrades the RNA of RNA-DNA hybrids. In Francisella tularensis subsp. holarctica (strain FTNF002-00 / FTA), this protein is Ribonuclease HII.